The chain runs to 429 residues: Phosphoglucosamine mutase (429 aa).

Ser96 acts as the Phosphoserine intermediate in catalysis. Residues Ser96, Asp230, Asp232, and Asp234 each coordinate Mg(2+). A Phosphoserine modification is found at Ser96.

The protein belongs to the phosphohexose mutase family. Mg(2+) serves as cofactor. Post-translationally, activated by phosphorylation.

The catalysed reaction is alpha-D-glucosamine 1-phosphate = D-glucosamine 6-phosphate. Catalyzes the conversion of glucosamine-6-phosphate to glucosamine-1-phosphate. This is Phosphoglucosamine mutase from Thermotoga petrophila (strain ATCC BAA-488 / DSM 13995 / JCM 10881 / RKU-1).